The sequence spans 361 residues: Cytochrome c peroxidase, mitochondrial (361 aa).

The N-terminal 41 residues, 1-41 (MASAARSASRAFLRSSLRPAVRSSRFALPTQGLRVASRRGY), are a transit peptide targeting the mitochondrion. Catalysis depends on His-122, which acts as the Proton acceptor. His-245 is a heme b binding site. Residue Trp-261 is the Tryptophan radical intermediate of the active site.

Belongs to the peroxidase family. Cytochrome c peroxidase subfamily. As to quaternary structure, forms a one-to-one complex with cytochrome c. The cofactor is heme b.

It is found in the mitochondrion matrix. Its subcellular location is the mitochondrion intermembrane space. It carries out the reaction 2 Fe(II)-[cytochrome c] + H2O2 + 2 H(+) = 2 Fe(III)-[cytochrome c] + 2 H2O. Its function is as follows. Destroys radicals which are normally produced within the cells and which are toxic to biological systems. The chain is Cytochrome c peroxidase, mitochondrial (ccp1) from Emericella nidulans (strain FGSC A4 / ATCC 38163 / CBS 112.46 / NRRL 194 / M139) (Aspergillus nidulans).